Consider the following 770-residue polypeptide: Metallothionein expression activator (770 aa).

The segment at 77 to 97 (LVPSPKTGDGSSDKKNIDRTW) is disordered. S80, S122, S247, S249, and S253 each carry phosphoserine. T259 carries the phosphothreonine modification. The interval 286-323 (PPPTLISPRMSNTSINGSPSRKYHRQRYPNKSPESNGL) is disordered. Polar residues predominate over residues 294-304 (RMSNTSINGSP). Phosphoserine occurs at positions 385, 392, and 483. 2 positions are modified to phosphothreonine: T486 and T501. Position 564 is a phosphoserine (S564). C2H2-type zinc fingers lie at residues 603 to 627 (FECL…IQTH) and 633 to 657 (YSCD…KISH). Residues 662 to 685 (YICPCGKRFNREDALMVHRSRMIC) form a C2H2-type 3; atypical zinc finger. The segment at 699–770 (LTSPKKSLLD…RTLSNETDAL (72 aa)) is disordered. The span at 705–745 (SLLDSPHDTSPVKETIARDKDGSVLMKMEEQLRDDMRKHGL) shows a compositional bias: basic and acidic residues. Phosphoserine occurs at positions 709 and 714. The segment covering 754-770 (AHEQNSNRTLSNETDAL) has biased composition (polar residues).

The protein resides in the nucleus. Its function is as follows. Plays a role in regulating basal-level expression of CUP1. Activates EGT2 transcription in the absence of SWI5. In Saccharomyces cerevisiae (strain ATCC 204508 / S288c) (Baker's yeast), this protein is Metallothionein expression activator (ACE2).